The following is a 470-amino-acid chain: 1-deoxy-D-xylulose 5-phosphate reductoisomerase, chloroplastic (470 aa).

T83, G84, S85, I86, G109, N111, and N197 together coordinate NADPH. Residue K198 participates in 1-deoxy-D-xylulose 5-phosphate binding. An NADPH-binding site is contributed by E199. Residue D223 participates in Mn(2+) binding. Residues S224, E225, S249, and H272 each contribute to the 1-deoxy-D-xylulose 5-phosphate site. A Mn(2+)-binding site is contributed by E225. G278 contributes to the NADPH binding site. 1-deoxy-D-xylulose 5-phosphate is bound by residues S285, N290, K291, and E294. E294 provides a ligand contact to Mn(2+).

The protein belongs to the DXR family. Mn(2+) serves as cofactor. It depends on Mg(2+) as a cofactor.

It is found in the plastid. It localises to the chloroplast. The enzyme catalyses 2-C-methyl-D-erythritol 4-phosphate + NADP(+) = 1-deoxy-D-xylulose 5-phosphate + NADPH + H(+). The protein operates within isoprenoid biosynthesis; isopentenyl diphosphate biosynthesis via DXP pathway; isopentenyl diphosphate from 1-deoxy-D-xylulose 5-phosphate: step 1/6. In terms of biological role, catalyzes the NADPH-dependent rearrangement and reduction of 1-deoxy-D-xylulose-5-phosphate (DXP) to 2-C-methyl-D-erythritol 4-phosphate (MEP). This is 1-deoxy-D-xylulose 5-phosphate reductoisomerase, chloroplastic (DXR) from Mentha piperita (Peppermint).